We begin with the raw amino-acid sequence, 469 residues long: 3-isopropylmalate dehydratase large subunit (469 aa).

C350, C410, and C413 together coordinate [4Fe-4S] cluster.

It belongs to the aconitase/IPM isomerase family. LeuC type 1 subfamily. As to quaternary structure, heterodimer of LeuC and LeuD. [4Fe-4S] cluster serves as cofactor.

The enzyme catalyses (2R,3S)-3-isopropylmalate = (2S)-2-isopropylmalate. It participates in amino-acid biosynthesis; L-leucine biosynthesis; L-leucine from 3-methyl-2-oxobutanoate: step 2/4. In terms of biological role, catalyzes the isomerization between 2-isopropylmalate and 3-isopropylmalate, via the formation of 2-isopropylmaleate. The sequence is that of 3-isopropylmalate dehydratase large subunit from Rhizobium etli (strain CIAT 652).